Here is a 369-residue protein sequence, read N- to C-terminus: Flagellar P-ring protein (369 aa).

The first 22 residues, 1–22 (MTKFKHLLALAALLLAAGAAQA), serve as a signal peptide directing secretion.

It belongs to the FlgI family. As to quaternary structure, the basal body constitutes a major portion of the flagellar organelle and consists of four rings (L,P,S, and M) mounted on a central rod.

The protein localises to the periplasm. It is found in the bacterial flagellum basal body. Assembles around the rod to form the L-ring and probably protects the motor/basal body from shearing forces during rotation. The protein is Flagellar P-ring protein of Pseudomonas aeruginosa (strain LESB58).